Here is a 228-residue protein sequence, read N- to C-terminus: RNA-free ribonuclease P (228 aa).

Belongs to the HARP family.

It catalyses the reaction Endonucleolytic cleavage of RNA, removing 5'-extranucleotides from tRNA precursor.. Its function is as follows. RNA-free RNase P that catalyzes the removal of the 5'-leader sequence from pre-tRNA to produce the mature 5'-terminus. This chain is RNA-free ribonuclease P, found in Methanopyrus kandleri (strain AV19 / DSM 6324 / JCM 9639 / NBRC 100938).